The primary structure comprises 480 residues: NADH-quinone oxidoreductase subunit N (480 aa).

14 helical membrane passes run 11–31, 38–58, 76–96, 105–125, 128–148, 163–183, 195–215, 240–260, 270–290, 298–318, 329–349, 368–388, 407–427, and 453–473; these read LLPE…GVFA, LVAA…AGLL, FALY…IAAA, APEY…LVSM, LFGV…MVAF, LITG…IYGV, AFGE…ISGL, AAFL…RILL, WTAL…LLAL, MLAY…AALQ, VMIY…TIDL, AAAM…SGFF, VAVA…FGII, and VYAM…LAAL.

This sequence belongs to the complex I subunit 2 family. As to quaternary structure, NDH-1 is composed of 14 different subunits. Subunits NuoA, H, J, K, L, M, N constitute the membrane sector of the complex.

It is found in the cell membrane. It catalyses the reaction a quinone + NADH + 5 H(+)(in) = a quinol + NAD(+) + 4 H(+)(out). Functionally, NDH-1 shuttles electrons from NADH, via FMN and iron-sulfur (Fe-S) centers, to quinones in the respiratory chain. The immediate electron acceptor for the enzyme in this species is believed to be a menaquinone. Couples the redox reaction to proton translocation (for every two electrons transferred, four hydrogen ions are translocated across the cytoplasmic membrane), and thus conserves the redox energy in a proton gradient. In Rubrobacter xylanophilus (strain DSM 9941 / JCM 11954 / NBRC 16129 / PRD-1), this protein is NADH-quinone oxidoreductase subunit N.